An 826-amino-acid polypeptide reads, in one-letter code: Putative ankyrin repeat protein RBE_0220 (826 aa).

8 ANK repeats span residues 308–337, 342–371, 375–404, 445–474, 478–507, 512–541, 545–574, and 578–607; these read LGTS…DQHA, IDMS…DPNY, DNDT…DPNK, NDFT…DVNA, DGFT…NPDV, TKSS…NPNL, DGTT…DINK, and NGDN…DLKK.

The sequence is that of Putative ankyrin repeat protein RBE_0220 from Rickettsia bellii (strain RML369-C).